Here is a 302-residue protein sequence, read N- to C-terminus: tRNA dimethylallyltransferase (302 aa).

9-16 (GPTGSGKT) serves as a coordination point for ATP. A substrate-binding site is contributed by 11–16 (TGSGKT).

The protein belongs to the IPP transferase family. As to quaternary structure, monomer. Mg(2+) serves as cofactor.

The enzyme catalyses adenosine(37) in tRNA + dimethylallyl diphosphate = N(6)-dimethylallyladenosine(37) in tRNA + diphosphate. Functionally, catalyzes the transfer of a dimethylallyl group onto the adenine at position 37 in tRNAs that read codons beginning with uridine, leading to the formation of N6-(dimethylallyl)adenosine (i(6)A). In Thermus thermophilus (strain ATCC BAA-163 / DSM 7039 / HB27), this protein is tRNA dimethylallyltransferase.